A 196-amino-acid chain; its full sequence is MKESIAKVYRKTGETEIKSEINLYGEGKYDIKTGIGFFDHMLNLMARHGLIDVKLEAKGDLQVDSHHTVEDVGIVLGESFKKALGDKKGIKRYGTSFVPMDEALASLSIDISGRPYIVCDFNFTVDKLGEMDTELVEEFLRALAFNAGITIHARVLYGKNNHHMIEAVFKALGRALREAVDRDERINGVMSTKGTL.

The protein belongs to the imidazoleglycerol-phosphate dehydratase family.

It is found in the cytoplasm. The enzyme catalyses D-erythro-1-(imidazol-4-yl)glycerol 3-phosphate = 3-(imidazol-4-yl)-2-oxopropyl phosphate + H2O. It functions in the pathway amino-acid biosynthesis; L-histidine biosynthesis; L-histidine from 5-phospho-alpha-D-ribose 1-diphosphate: step 6/9. The polypeptide is Imidazoleglycerol-phosphate dehydratase (Clostridium botulinum (strain Okra / Type B1)).